The chain runs to 352 residues: 3-isopropylmalate dehydrogenase (352 aa).

71 to 87 serves as a coordination point for NAD(+); the sequence is GAHDSAWNQLPRHLRPE. Residues arginine 94, arginine 104, arginine 132, and aspartate 218 each coordinate substrate. Residues aspartate 218, aspartate 242, and aspartate 246 each contribute to the Mg(2+) site. NAD(+) is bound at residue 275 to 287; the sequence is GSAPDIAGQGVAN.

It belongs to the isocitrate and isopropylmalate dehydrogenases family. LeuB type 1 subfamily. Homodimer. Mg(2+) is required as a cofactor. The cofactor is Mn(2+).

It is found in the cytoplasm. It carries out the reaction (2R,3S)-3-isopropylmalate + NAD(+) = 4-methyl-2-oxopentanoate + CO2 + NADH. It functions in the pathway amino-acid biosynthesis; L-leucine biosynthesis; L-leucine from 3-methyl-2-oxobutanoate: step 3/4. Functionally, catalyzes the oxidation of 3-carboxy-2-hydroxy-4-methylpentanoate (3-isopropylmalate) to 3-carboxy-4-methyl-2-oxopentanoate. The product decarboxylates to 4-methyl-2 oxopentanoate. The protein is 3-isopropylmalate dehydrogenase of Deinococcus radiodurans (strain ATCC 13939 / DSM 20539 / JCM 16871 / CCUG 27074 / LMG 4051 / NBRC 15346 / NCIMB 9279 / VKM B-1422 / R1).